Here is a 619-residue protein sequence, read N- to C-terminus: Calnexin (619 aa).

An N-terminal signal peptide occupies residues 1–21; it reads MVNRKWMYIFIQFLLVSSIRS. Aspartate 109 provides a ligand contact to Ca(2+). A disulfide bridge links cysteine 152 with cysteine 186. Residues tyrosine 156, lysine 158, tyrosine 177, and aspartate 184 each contribute to the an alpha-D-glucoside site. Asparagine 203 is a glycosylation site (N-linked (GlcNAc...) asparagine). The p domain (Extended arm) stretch occupies residues 268–401; the sequence is IFDETDLKPV…RLIDNPNYFE (134 aa). 5 consecutive repeat copies span residues 270–282, 287–299, 306–318, 325–337, and 340–350. 4 X approximate repeats regions lie at residues 270-337 and 340-397; these read DETD…WDED and GSWE…IDNP. Cysteine 352 and cysteine 358 are disulfide-bonded. Repeat copies occupy residues 359–369, 373–383, and 387–397. Glutamate 417 contributes to the an alpha-D-glucoside binding site. Position 428 (aspartate 428) interacts with Ca(2+). The helical transmembrane segment at 481 to 501 threads the bilayer; it reads LWAVYILCVLLPLVAIGVFCF. The segment at 538–619 is disordered; the sequence is GDEEDDVNQP…AKRRTARRGD (82 aa). Residues 547 to 557 are compositionally biased toward polar residues; it reads PGPSGSQSNPE. Residues 566 to 577 show a composition bias toward low complexity; that stretch reads EQQSANSSQSSA. Asparagine 571 carries an N-linked (GlcNAc...) asparagine glycan. The segment covering 585-601 has biased composition (basic and acidic residues); sequence HVVPENEPVKPTEEFAK. Basic residues predominate over residues 610 to 619; it reads AKRRTARRGD.

This sequence belongs to the calreticulin family. Post-translationally, glycosylation is important for its biological activity. In terms of tissue distribution, expressed ubiquitously in every blastomere of the embryo up to the gastrulation stage. Expression becomes gradually restricted to the head and tail regions at the comma stage during embryogenesis. During postembryonic development, expressed prominently in the H-shaped excretory cell, in the neurons of head (including ASK and ADL) and tail (including PHA and PHB), in the dorsal and ventral nerve cords, and in the spermatheca. Expressed in the spicules of the male tail (at protein level).

The protein resides in the endoplasmic reticulum membrane. It localises to the cytoplasm. It is found in the perinuclear region. Its subcellular location is the cytoplasmic vesicle. Functionally, calcium-binding protein that interacts with newly synthesized monoglucosylated glycoproteins in the endoplasmic reticulum. It may act in assisting protein assembly and/or in the retention within the ER of unassembled protein subunits. It seems to play a major role in the quality control apparatus of the ER by the retention of incorrectly folded proteins. Required for embryogenesis and larval development under heat and ER stress conditions. May be important for germ cell development. Involved in neuronal necrotic cell death. The chain is Calnexin (cnx-1) from Caenorhabditis elegans.